The sequence spans 489 residues: Aklavinone 12-hydroxylase DnrF (489 aa).

Residues 17-18 (LG), glutamate 37, glutamine 121, and leucine 145 each bind FAD. The active-site Proton acceptor is the tyrosine 224. Residue aspartate 308 participates in FAD binding. Position 317 (glycine 317) interacts with aklavinone. The tract at residues 402 to 428 (VAAEDDDPEPTEDPRRPSGRPGFRAPH) is disordered.

It belongs to the PheA/TfdB FAD monooxygenase family. Monomer. The cofactor is FAD.

The enzyme catalyses aklavinone + NADPH + O2 + H(+) = epsilon-rhodomycinone + NADP(+) + H2O. The protein operates within antibiotic biosynthesis; daunorubicin biosynthesis. It participates in antibiotic biosynthesis; carminomycin biosynthesis. It functions in the pathway antibiotic biosynthesis; rhodomycin biosynthesis. Its pathway is antibiotic biosynthesis; doxorubicin biosynthesis. In terms of biological role, involved in the biosynthesis of the anthracyclines carminomycin, rhodomycin, daunorubicin (daunomycin) and doxorubicin (adriamycin) which are aromatic polyketide antibiotics that exhibit high cytotoxicity and are widely applied in the chemotherapy of a variety of cancers. Catalyzes the incorporation of a hydroxyl group at position C-11 of aklavinone, resulting in epsilon-rhodomycinone. The protein is Aklavinone 12-hydroxylase DnrF (dnrF) of Streptomyces peucetius subsp. caesius.